We begin with the raw amino-acid sequence, 204 residues long: Lymphotoxin-alpha (204 aa).

The first 33 residues, 1–33, serve as a signal peptide directing secretion; the sequence is MTPPGRLYLRRVCSTPILLLLGLLLALPPEAQG. The THD domain maps to 62-204; the sequence is PAAHLVGDPS…SSVFFGAFAL (143 aa). An N-linked (GlcNAc...) asparagine glycan is attached at Asn-95. Cys-119 and Cys-155 are joined by a disulfide.

Belongs to the tumor necrosis factor family. Homotrimer, and heterotrimer of either two LTB and one LTA subunits or (less prevalent) two LTA and one LTB subunits. Interacts with TNFRSF14.

The protein localises to the secreted. The protein resides in the membrane. Functionally, cytokine that in its homotrimeric form binds to TNFRSF1A/TNFR1, TNFRSF1B/TNFBR and TNFRSF14/HVEM. In its heterotrimeric form with LTB binds to TNFRSF3/LTBR. Lymphotoxin is produced by lymphocytes and is cytotoxic for a wide range of tumor cells in vitro and in vivo. This is Lymphotoxin-alpha (LTA) from Sus scrofa (Pig).